The chain runs to 175 residues: NADH-quinone oxidoreductase subunit I (175 aa).

2 consecutive 4Fe-4S ferredoxin-type domains span residues 44–74 (LNRY…VEGA) and 90–119 (RVYQ…MTND). [4Fe-4S] cluster contacts are provided by Cys-54, Cys-57, Cys-60, Cys-64, Cys-99, Cys-102, Cys-105, and Cys-109. The interval 148–175 (PPHAMAPGATDEDYYRGTVSPSAEADAR) is disordered.

It belongs to the complex I 23 kDa subunit family. NDH-1 is composed of 14 different subunits. Subunits NuoA, H, J, K, L, M, N constitute the membrane sector of the complex. [4Fe-4S] cluster is required as a cofactor.

It localises to the cell membrane. The catalysed reaction is a quinone + NADH + 5 H(+)(in) = a quinol + NAD(+) + 4 H(+)(out). In terms of biological role, NDH-1 shuttles electrons from NADH, via FMN and iron-sulfur (Fe-S) centers, to quinones in the respiratory chain. The immediate electron acceptor for the enzyme in this species is believed to be menaquinone. Couples the redox reaction to proton translocation (for every two electrons transferred, four hydrogen ions are translocated across the cytoplasmic membrane), and thus conserves the redox energy in a proton gradient. The protein is NADH-quinone oxidoreductase subunit I of Mycolicibacterium gilvum (strain PYR-GCK) (Mycobacterium gilvum (strain PYR-GCK)).